We begin with the raw amino-acid sequence, 445 residues long: Sporulation-specific glucan 1,3-beta-glucosidase (445 aa).

Positions 1 to 21 are cleaved as a signal peptide; it reads MVSFRGLTTLTLLFTKLVNCN. N-linked (GlcNAc...) asparagine glycosylation occurs at asparagine 201. The Proton donor role is filled by glutamate 233. Residue glutamate 335 is the Nucleophile of the active site.

This sequence belongs to the glycosyl hydrolase 5 (cellulase A) family.

It localises to the secreted. The catalysed reaction is Successive hydrolysis of beta-D-glucose units from the non-reducing ends of (1-&gt;3)-beta-D-glucans, releasing alpha-glucose.. Its function is as follows. Probably involved in the processes of spore formation and contributes to ascospore thermoresistance by participating in the morphogenesis of ascospore walls. The enzyme may do this by modifying glucan linkages in the developing ascospore wall, thus strengthening it or lending it plasticity. The polypeptide is Sporulation-specific glucan 1,3-beta-glucosidase (SPR1) (Saccharomyces cerevisiae (strain ATCC 204508 / S288c) (Baker's yeast)).